We begin with the raw amino-acid sequence, 103 residues long: Small ribosomal subunit protein uS10 (103 aa).

This sequence belongs to the universal ribosomal protein uS10 family. In terms of assembly, part of the 30S ribosomal subunit.

Functionally, involved in the binding of tRNA to the ribosomes. The protein is Small ribosomal subunit protein uS10 of Stenotrophomonas maltophilia (strain R551-3).